The sequence spans 673 residues: UvrABC system protein B (673 aa).

The region spanning 26 to 183 (ANFEAGLAKQ…RHLTDLQYTR (158 aa)) is the Helicase ATP-binding domain. Position 39–46 (39–46 (GVTGSGKT)) interacts with ATP. The Beta-hairpin motif lies at 92-115 (YYDYYQPEAYVPSSDTFIEKDSSI). Residues 431-597 (QVDDLMSEIH…SVERPISDIM (167 aa)) enclose the Helicase C-terminal domain. The disordered stretch occupies residues 601–631 (REDAAEKKSGKGRSKSRQVAEETPDYRAMKP). Residues 618 to 630 (QVAEETPDYRAMK) are compositionally biased toward basic and acidic residues. Residues 635 to 670 (AGKLKSLEQKMYQHAKDLEFEAAAQIRDQIQKLKTA) form the UVR domain.

It belongs to the UvrB family. As to quaternary structure, forms a heterotetramer with UvrA during the search for lesions. Interacts with UvrC in an incision complex.

It localises to the cytoplasm. In terms of biological role, the UvrABC repair system catalyzes the recognition and processing of DNA lesions. A damage recognition complex composed of 2 UvrA and 2 UvrB subunits scans DNA for abnormalities. Upon binding of the UvrA(2)B(2) complex to a putative damaged site, the DNA wraps around one UvrB monomer. DNA wrap is dependent on ATP binding by UvrB and probably causes local melting of the DNA helix, facilitating insertion of UvrB beta-hairpin between the DNA strands. Then UvrB probes one DNA strand for the presence of a lesion. If a lesion is found the UvrA subunits dissociate and the UvrB-DNA preincision complex is formed. This complex is subsequently bound by UvrC and the second UvrB is released. If no lesion is found, the DNA wraps around the other UvrB subunit that will check the other stand for damage. This Xanthomonas oryzae pv. oryzae (strain MAFF 311018) protein is UvrABC system protein B.